The chain runs to 184 residues: Ribosome-recycling factor (184 aa).

This sequence belongs to the RRF family.

The protein resides in the cytoplasm. In terms of biological role, responsible for the release of ribosomes from messenger RNA at the termination of protein biosynthesis. May increase the efficiency of translation by recycling ribosomes from one round of translation to another. The polypeptide is Ribosome-recycling factor (Caldicellulosiruptor saccharolyticus (strain ATCC 43494 / DSM 8903 / Tp8T 6331)).